The primary structure comprises 904 residues: Pentatricopeptide repeat-containing protein At4g30825, chloroplastic (904 aa).

A chloroplast-targeting transit peptide spans 1–61 (MGSLRFSIPL…SSTRVLDKIR (61 aa)). Residues 75–94 (NSASAAPVERSRSSKLSGDQ) are disordered. PPR repeat units lie at residues 173 to 203 (NFVAYSLILRVLGRREEWDRAEDLIKELCGF), 209 to 243 (SYQVFNTVIYACTKKGNVKLASKWFHMMLEFGVRP), 244 to 274 (NVATIGMLMGLYQKNWNVEEAEFAFSHMRKF), 278 to 312 (CESAYSSMITIYTRLRLYDKAEEVIDLMKQDRVRL), 313 to 347 (KLENWLVMLNAYSQQGKMELAESILVSMEAAGFSP), 348 to 382 (NIIAYNTLITGYGKIFKMEAAQGLFHRLCNIGLEP), 383 to 417 (DETSYRSMIEGWGRADNYEEAKHYYQELKRCGYKP), 418 to 452 (NSFNLFTLINLQAKYGDRDGAIKTIEDMTGIGCQY), 487 to 521 (NQTSFSSLVMAYVKHGMVDDCLGLLREKKWRDSAF), 522 to 553 (ESHLYHLLICSCKESGQLTDAVKIYNHKMESD), 557 to 591 (NLHITSTMIDIYTVMGEFSEAEKLYLNLKSSGVVL), 592 to 622 (DRIGFSIVVRMYVKAGSLEEACSVLEIMDEQ), 628 to 662 (DVYLFRDMLRIYQKCDLQDKLQHLYYRIRKSGIHW), 663 to 697 (NQEMYNCVINCCARALPLDELSGTFEEMIRYGFTP), 698 to 732 (NTVTFNVLLDVYGKAKLFKKVNELFLLAKRHGVVD), 733 to 766 (VISYNTIIAAYGKNKDYTNMSSAIKNMQFDGFSV), 767 to 801 (SLEAYNTLLDAYGKDKQMEKFRSILKRMKKSTSGP), 802 to 836 (DHYTYNIMINIYGEQGWIDEVADVLKELKESGLGP), 837 to 871 (DLCSYNTLIKAYGIGGMVEEAVGLVKEMRGRNIIP), and 872 to 904 (DKVTYTNLVTALRRNDEFLEAIKWSLWMKQMGI).

This sequence belongs to the PPR family. P subfamily.

It is found in the plastid. Its subcellular location is the chloroplast. In Arabidopsis thaliana (Mouse-ear cress), this protein is Pentatricopeptide repeat-containing protein At4g30825, chloroplastic.